The sequence spans 253 residues: uncharacterized protein (253 aa).

Belongs to the A.longa ORF167/ORF288 family.

The protein resides in the plastid. This is an uncharacterized protein from Euglena longa (Euglenophycean alga).